The chain runs to 184 residues: Non-specific lipid transfer protein GPI-anchored 6 (184 aa).

A signal peptide spans 1-24 (MEKSTRTLFITIVITSMLLGFGNS). 4 disulfide bridges follow: Cys-33–Cys-74, Cys-43–Cys-58, Cys-59–Cys-101, and Cys-72–Cys-111. The tract at residues 138-158 (NSTSPTQIHKDGTGGGKAEPV) is disordered. Ser-160 is lipidated: GPI-anchor amidated serine. Positions 161–184 (NGWKEKSWLGVELLIYLLVSLIFF) are cleaved as a propeptide — removed in mature form.

This sequence belongs to the plant LTP family. Preferentially expressed in the shoot apical meristem and the root meristem. Also present in the ovules and developing embryos. Observed in cotyledons, hypocotyls, flowers, leaves and siliques. Up-regulated in the epidermis of stems.

The protein resides in the cell membrane. In terms of biological role, lipid transfer protein involved in seed and ovule maturation and development, probably by regulating the fatty acids homeostasis during suberin and sporopollenin biosynthesis or deposition. Contributes to pre-invasive defense against some non-host powdery mildew pathogens by preventing the penetration of the epidermal cell wall by the fungal agents (e.g. Blumeria graminis f. sp. hordei (Bgh)). The chain is Non-specific lipid transfer protein GPI-anchored 6 from Arabidopsis thaliana (Mouse-ear cress).